Here is a 114-residue protein sequence, read N- to C-terminus: Hydrogenase maturation factor HypA (114 aa).

His-2 is a binding site for Ni(2+). Zn(2+)-binding residues include Cys-73, Cys-76, Cys-89, and Cys-92.

Belongs to the HypA/HybF family.

Its function is as follows. Involved in the maturation of [NiFe] hydrogenases. Required for nickel insertion into the metal center of the hydrogenase. This Psychromonas ingrahamii (strain DSM 17664 / CCUG 51855 / 37) protein is Hydrogenase maturation factor HypA.